A 261-amino-acid polypeptide reads, in one-letter code: Kallikrein 1-related peptidase b8 (261 aa).

A signal peptide spans 1–18 (MRFLILFLALSLGGIDAA). Residues 19 to 24 (PPLQSR) constitute a propeptide, activation peptide. The region spanning 25 to 258 (VVGGFNCEKN…FNSWIKDTMT (234 aa)) is the Peptidase S1 domain. Cystine bridges form between Cys-31–Cys-173, Cys-50–Cys-66, Cys-152–Cys-219, Cys-184–Cys-198, and Cys-209–Cys-234. Catalysis depends on His-65, which acts as the Charge relay system. Asn-102 is a glycosylation site (N-linked (GlcNAc...) asparagine). The active-site Charge relay system is the Asp-120. Ser-213 functions as the Charge relay system in the catalytic mechanism.

It belongs to the peptidase S1 family. Kallikrein subfamily.

It carries out the reaction Preferential cleavage of Arg-|-Xaa bonds in small molecule substrates. Highly selective action to release kallidin (lysyl-bradykinin) from kininogen involves hydrolysis of Met-|-Xaa or Leu-|-Xaa.. In terms of biological role, glandular kallikreins cleave Met-Lys and Arg-Ser bonds in kininogen to release Lys-bradykinin. This Mus musculus (Mouse) protein is Kallikrein 1-related peptidase b8 (Klk1b8).